We begin with the raw amino-acid sequence, 107 residues long: Phosphoribosyl-ATP pyrophosphatase (107 aa).

Belongs to the PRA-PH family.

It is found in the cytoplasm. The catalysed reaction is 1-(5-phospho-beta-D-ribosyl)-ATP + H2O = 1-(5-phospho-beta-D-ribosyl)-5'-AMP + diphosphate + H(+). Its pathway is amino-acid biosynthesis; L-histidine biosynthesis; L-histidine from 5-phospho-alpha-D-ribose 1-diphosphate: step 2/9. The protein is Phosphoribosyl-ATP pyrophosphatase of Bacillus thuringiensis (strain Al Hakam).